A 262-amino-acid polypeptide reads, in one-letter code: Adenosine deaminase RL5 (262 aa).

Residues N36, Y40, M68, H73, C75, N114, C118, H135, C172, C175, C234, and C237 each coordinate Cu cation.

It belongs to the purine nucleoside phosphorylase YfiH/LACC1 family. In terms of assembly, homodimer. Requires Cu cation as cofactor.

The catalysed reaction is adenosine + phosphate = alpha-D-ribose 1-phosphate + adenine. The enzyme catalyses S-methyl-5'-thioadenosine + phosphate = 5-(methylsulfanyl)-alpha-D-ribose 1-phosphate + adenine. It carries out the reaction inosine + phosphate = alpha-D-ribose 1-phosphate + hypoxanthine. It catalyses the reaction adenosine + H2O + H(+) = inosine + NH4(+). In terms of biological role, purine nucleoside enzyme that catalyzes the phosphorolysis of adenosine and inosine nucleosides, yielding D-ribose 1-phosphate and the respective free bases, adenine and hypoxanthine. Also catalyzes the phosphorolysis of S-methyl-5'-thioadenosine into adenine and S-methyl-5-thio-alpha-D-ribose 1-phosphate. Also has adenosine deaminase activity. Also acts as a multicopper oxidase able to oxidize a wide variety of polyphenols and related compounds in vitro. Displays substrate preference as follows: syringaldazine &gt; 2,6-dimethoxyphenol &gt; veratryl alcohol &gt; guaiacol &gt; tetramethylbenzidine &gt; 4-methoxybenzyl alcohol &gt; 2,2'-azino-bis(3-ethylbenzthiazoline-6-sulfonic acid) (ABTS) &gt;&gt; phenol red &gt; 1-hydroxybenzotriazole. Cannot use 3,4-dimetoxybenzyl alcohol and violuric acid as substrates. As this enzyme is derived from a rumen microbial community, it may have a role in the digestion of complex plant materials such as ryegrass lignin. This Unknown prokaryotic organism protein is Adenosine deaminase RL5.